Here is a 506-residue protein sequence, read N- to C-terminus: Maturase K (506 aa).

Belongs to the intron maturase 2 family. MatK subfamily.

The protein resides in the plastid. It localises to the chloroplast. In terms of biological role, usually encoded in the trnK tRNA gene intron. Probably assists in splicing its own and other chloroplast group II introns. The chain is Maturase K from Olea europaea (Common olive).